The chain runs to 391 residues: Protein Wnt-2b (391 aa).

5 disulfides stabilise this stretch: Cys107/Cys118, Cys158/Cys166, Cys168/Cys188, Cys237/Cys251, and Cys239/Cys246. Asn117 is a glycosylation site (N-linked (GlcNAc...) asparagine). Ser243 carries the O-palmitoleoyl serine; by PORCN lipid modification. An N-linked (GlcNAc...) asparagine glycan is attached at Asn283. 6 disulfide bridges follow: Cys309-Cys340, Cys325-Cys335, Cys339-Cys379, Cys355-Cys370, Cys357-Cys367, and Cys362-Cys363.

Belongs to the Wnt family. In terms of assembly, forms a soluble 1:1 complex with AFM; this prevents oligomerization and is required for prolonged biological activity. The complex with AFM may represent the physiological form in body fluids. Interacts with FZD4 and FZD5. Post-translationally, palmitoleoylation is required for efficient binding to frizzled receptors. Depalmitoleoylation leads to Wnt signaling pathway inhibition. Isoform 1 is expressed in adult heart, brain, placenta, lung, prostate, testis, ovary, small intestine and colon. In the adult brain, it is mainly found in the caudate nucleus, subthalamic nucleus and thalamus. Also detected in fetal brain, lung and kidney. Isoform 2 is expressed in fetal brain, fetal lung, fetal kidney, caudate nucleus, testis and cancer cell lines.

The protein localises to the secreted. It localises to the extracellular space. The protein resides in the extracellular matrix. Its function is as follows. Ligand for members of the frizzled family of seven transmembrane receptors. Functions in the canonical Wnt/beta-catenin signaling pathway. Plays a redundant role in embryonic lung development. In Homo sapiens (Human), this protein is Protein Wnt-2b (WNT2B).